The following is a 1060-amino-acid chain: Beta-galactosidase (1060 aa).

Substrate contacts are provided by N110 and D209. A Na(+)-binding site is contributed by D209. Residues E432, H434, and E477 each contribute to the Mg(2+) site. Residues E477 and 553–556 (EYAH) each bind substrate. E477 (proton donor) is an active-site residue. The active-site Nucleophile is E553. N613 is a binding site for Mg(2+). Na(+) contacts are provided by F617 and N620. Residues N620 and W1035 each coordinate substrate.

This sequence belongs to the glycosyl hydrolase 2 family. In terms of assembly, homotetramer. Mg(2+) serves as cofactor. Requires Na(+) as cofactor.

It carries out the reaction Hydrolysis of terminal non-reducing beta-D-galactose residues in beta-D-galactosides.. In Yersinia pestis bv. Antiqua (strain Antiqua), this protein is Beta-galactosidase.